The sequence spans 851 residues: DNA mismatch repair protein MutS (851 aa).

Residue 602-609 participates in ATP binding; that stretch reads GPNMSGKS.

Belongs to the DNA mismatch repair MutS family.

In terms of biological role, this protein is involved in the repair of mismatches in DNA. It is possible that it carries out the mismatch recognition step. This protein has a weak ATPase activity. The protein is DNA mismatch repair protein MutS of Streptococcus equi subsp. equi (strain 4047).